A 425-amino-acid chain; its full sequence is Putative integrase/recombinase y4rF (425 aa).

The Core-binding (CB) domain occupies 123 to 210 (DPDALLLASF…HIRTFLRFLC (88 aa)). One can recognise a Tyr recombinase domain in the interval 233-418 (HLPPRLAWGD…AASQLAEVAL (186 aa)). Active-site residues include Arg-273, Lys-298, His-370, Arg-373, and His-396. The O-(3'-phospho-DNA)-tyrosine intermediate role is filled by Tyr-405.

It belongs to the 'phage' integrase family.

This Sinorhizobium fredii (strain NBRC 101917 / NGR234) protein is Putative integrase/recombinase y4rF.